We begin with the raw amino-acid sequence, 434 residues long: Alpha-enolase (434 aa).

An N-acetylserine modification is found at S2. S40 serves as a coordination point for Mg(2+). Y44 is subject to Phosphotyrosine. At K60 the chain carries N6-acetyllysine; alternate. The residue at position 60 (K60) is an N6-succinyllysine; alternate. K71 is modified (N6-acetyllysine). K89 is subject to N6-acetyllysine; alternate. K89 is modified (N6-succinyllysine; alternate). N6-acetyllysine occurs at positions 92 and 126. Residues H158 and E167 each coordinate substrate. 2 positions are modified to N6-acetyllysine: K193 and K199. K202 is subject to N6-acetyllysine; alternate. K202 is covalently cross-linked (Glycyl lysine isopeptide (Lys-Gly) (interchain with G-Cter in SUMO2); alternate). The active-site Proton donor is the E210. N6-acetyllysine; alternate occurs at positions 228 and 233. Residue K228 is modified to N6-succinyllysine; alternate. At K228 the chain carries N6-(2-hydroxyisobutyryl)lysine; alternate. N6-malonyllysine; alternate is present on K233. D245 provides a ligand contact to Mg(2+). S254 is modified (phosphoserine). The residue at position 256 (K256) is an N6-acetyllysine. The residue at position 263 (S263) is a Phosphoserine. An N6-acetyllysine; alternate modification is found at K281. At K281 the chain carries N6-(2-hydroxyisobutyryl)lysine; alternate. Y287 is modified (phosphotyrosine). At S291 the chain carries Phosphoserine. Mg(2+) contacts are provided by E293 and D318. E293 and D318 together coordinate substrate. 2 positions are modified to N6-acetyllysine: K335 and K343. K343 (proton acceptor) is an active-site residue. Residues 370 to 373 (SHRS) and K394 contribute to the substrate site. The interval 405-434 (AKYNQILRIEEELGSKAKFAGRSFRNPLAK) is required for interaction with PLG. K406 is subject to N6-acetyllysine. K420 bears the N6-acetyllysine; alternate mark. At K420 the chain carries N6-succinyllysine; alternate. Position 420 is an N6-malonyllysine; alternate (K420).

This sequence belongs to the enolase family. As to quaternary structure, mammalian enolase is composed of 3 isozyme subunits, alpha, beta and gamma, which can form homodimers or heterodimers which are cell-type and development-specific. ENO1 interacts with PLG in the neuronal plasma membrane and promotes its activation. The C-terminal lysine is required for this binding. In vitro, interacts with several glycolytic enzymes including PKM, PGM, CKM and aldolase. Also binds troponin, in vitro. Interacts with ENO4 and PGAM2. Interacts with CMTM6. The cofactor is Mg(2+). ISGylated. In terms of processing, lysine 2-hydroxyisobutyrylation (Khib) by p300/EP300 activates the phosphopyruvate hydratase activity. As to expression, testis. Found in the principal piece of sperm tail (at protein level). The alpha/alpha homodimer is expressed in embryo and in most adult tissues. The alpha/beta heterodimer and the beta/beta homodimer are found in striated muscle, and the alpha/gamma heterodimer and the gamma/gamma homodimer in neurons. In striated muscle, expression of ENO1 appears to be independent of fiber type.

The protein resides in the cytoplasm. The protein localises to the cell membrane. It carries out the reaction (2R)-2-phosphoglycerate = phosphoenolpyruvate + H2O. The protein operates within carbohydrate degradation; glycolysis; pyruvate from D-glyceraldehyde 3-phosphate: step 4/5. Glycolytic enzyme the catalyzes the conversion of 2-phosphoglycerate to phosphoenolpyruvate. In addition to glycolysis, involved in various processes such as growth control, hypoxia tolerance and allergic responses. May also function in the intravascular and pericellular fibrinolytic system due to its ability to serve as a receptor and activator of plasminogen on the cell surface of several cell-types such as leukocytes and neurons. Stimulates immunoglobulin production. This Mus musculus (Mouse) protein is Alpha-enolase (Eno1).